Consider the following 306-residue polypeptide: UDP-N-acetylenolpyruvoylglucosamine reductase (306 aa).

Residues 34–198 form the FAD-binding PCMH-type domain; that stretch reads VGGPADLLIT…LEVTFKLHNS (165 aa). Arg-177 is a catalytic residue. Catalysis depends on Ser-227, which acts as the Proton donor. The active site involves Glu-297.

It belongs to the MurB family. FAD is required as a cofactor.

It is found in the cytoplasm. The enzyme catalyses UDP-N-acetyl-alpha-D-muramate + NADP(+) = UDP-N-acetyl-3-O-(1-carboxyvinyl)-alpha-D-glucosamine + NADPH + H(+). It functions in the pathway cell wall biogenesis; peptidoglycan biosynthesis. Cell wall formation. In Clostridium botulinum (strain ATCC 19397 / Type A), this protein is UDP-N-acetylenolpyruvoylglucosamine reductase.